The following is a 387-amino-acid chain: Type 2 DNA topoisomerase 6 subunit A (387 aa).

A Topo IIA-type catalytic domain is found at 12 to 160 (EARKKAADTL…MLILSKEKGK (149 aa)). Y106 (O-(5'-phospho-DNA)-tyrosine intermediate) is an active-site residue. Residues E207 and D259 each coordinate Mg(2+).

The protein belongs to the TOP6A family. As to quaternary structure, homodimer. Heterotetramer of two Top6A and two Top6B chains. It depends on Mg(2+) as a cofactor.

It carries out the reaction ATP-dependent breakage, passage and rejoining of double-stranded DNA.. Its function is as follows. Relaxes both positive and negative superturns and exhibits a strong decatenase activity. This is Type 2 DNA topoisomerase 6 subunit A from Sulfurisphaera tokodaii (strain DSM 16993 / JCM 10545 / NBRC 100140 / 7) (Sulfolobus tokodaii).